Here is a 94-residue protein sequence, read N- to C-terminus: Small ribosomal subunit protein bS20 (94 aa).

Residues 1 to 10 are compositionally biased toward basic and acidic residues; sequence MANHASADKR. A disordered region spans residues 1–20; it reads MANHASADKRNRQRITRTAR. Residues 11 to 20 show a composition bias toward basic residues; sequence NRQRITRTAR.

Belongs to the bacterial ribosomal protein bS20 family.

Functionally, binds directly to 16S ribosomal RNA. The protein is Small ribosomal subunit protein bS20 of Sorangium cellulosum (strain So ce56) (Polyangium cellulosum (strain So ce56)).